We begin with the raw amino-acid sequence, 282 residues long: Aquaporin-6 (282 aa).

Residues 1-25 are Cytoplasmic-facing; sequence MDAVEPGGRGWASMLACRLWKAISR. A helical membrane pass occupies residues 26 to 46; sequence ALFAEFLATGLYVFFGVGSVM. Over 47–54 the chain is Extracellular; it reads RWPTALPS. The helical transmembrane segment at 55 to 73 threads the bilayer; sequence VLQIAITFNLVTAMAVQVT. Over 74–78 the chain is Cytoplasmic; that stretch reads WKASG. The discontinuously helical intramembrane region spans 79–88; it reads AHANPAVTLA. Residues 82–84 carry the NPA 1 motif; it reads NPA. Over 89 to 99 the chain is Cytoplasmic; that stretch reads FLVGSHISLPR. A helical transmembrane segment spans residues 100 to 121; that stretch reads AVAYVAAQLVGATVGAALLYGV. Over 122 to 141 the chain is Extracellular; it reads MPGDIRETLGINVVRNSVST. Residues 142–162 form a helical membrane-spanning segment; it reads GQAVAVELLLTLQLVLCVFAS. At 163–168 the chain is on the cytoplasmic side; sequence TDSRQT. Residues 169–188 form a helical membrane-spanning segment; it reads SGSPATMIGISVALGHLIGI. Residues 189–192 lie on the Extracellular side of the membrane; sequence HFTG. The segment at residues 193–205 is an intramembrane region (discontinuously helical); sequence CSMNPARSFGPAI. Residues 196-198 carry the NPA 2 motif; that stretch reads NPA. Over 206-213 the chain is Extracellular; that stretch reads IIGKFTVH. The chain crosses the membrane as a helical span at residues 214 to 234; it reads WVFWVGPLMGALLASLIYNFV. Topologically, residues 235 to 282 are cytoplasmic; the sequence is LFPDTKTLAQRLAILTGTVEVGTGAGAGAEPLKKESQPGSGAVEMESV. The segment at 260–282 is disordered; the sequence is GAGAEPLKKESQPGSGAVEMESV.

It belongs to the MIP/aquaporin (TC 1.A.8) family. As to quaternary structure, homotetramer; each monomer provides an independent solute pore.

It localises to the cytoplasmic vesicle membrane. The catalysed reaction is nitrate(in) = nitrate(out). The enzyme catalyses iodide(out) = iodide(in). It carries out the reaction bromide(in) = bromide(out). It catalyses the reaction chloride(in) = chloride(out). The catalysed reaction is Na(+)(in) = Na(+)(out). The enzyme catalyses H2O(in) = H2O(out). It carries out the reaction CO2(out) = CO2(in). It catalyses the reaction NH4(+)(in) = NH4(+)(out). Aquaporins form homotetrameric transmembrane channels, with each monomer independently mediating water transport across the plasma membrane along its osmotic gradient. Unlike classical aquaporins, AQP6 is an intracellular channel with selective anion permeability, particularly for nitrate, and exhibits very low water permeability. It may also facilitate the transport of gases, such as CO2 and NH4(+), as demonstrated in vitro. This chain is Aquaporin-6, found in Homo sapiens (Human).